Reading from the N-terminus, the 493-residue chain is MTELTNLTVAQIRDGHRAGDFSAVEVAEAFNANVAAAKALNAFIVETPDLAIEAAKAADADRAAGTLKPLSGVPIGMKDLFCTNGVQTTAASHMLEGFVPRYESTVSQKLWDAGAGMLGKLNLDQFAMGSSNETSYFGNVISPWRRNDGGNAALAPGGSSGGSSAAIAARLCPAATGTDTGGSIRQPAAFTGISGIKPTYGRCSRWGIVAFASSLDQAGPMARTVRDCAIMLENMAGFDPKDATSLDLPVPNWEAALSSDLRGKTVGIPREYRLEGIDPDIDAMWDAGIAMLKDAEAAVVEISLPHTKYALPAYYIIAPAEASSNLARYDGVRYGLRDLPQGAGLQDMYAATRAEGFGAEVKRRIMIGTYVLSAGFYDAYYTQAQKVRTLIARDFEAAFGSCDVILAPTAPSAAFGLGEKMADPLAMYLNDVFAVPASLAGLPAMSVPAALNREGLPLGLQIIGKPFDEQGVLNAGLAIEERAGFTARAEKWW.

Catalysis depends on charge relay system residues lysine 78 and serine 159. Residue serine 183 is the Acyl-ester intermediate of the active site.

It belongs to the amidase family. GatA subfamily. As to quaternary structure, heterotrimer of A, B and C subunits.

The enzyme catalyses L-glutamyl-tRNA(Gln) + L-glutamine + ATP + H2O = L-glutaminyl-tRNA(Gln) + L-glutamate + ADP + phosphate + H(+). Its function is as follows. Allows the formation of correctly charged Gln-tRNA(Gln) through the transamidation of misacylated Glu-tRNA(Gln) in organisms which lack glutaminyl-tRNA synthetase. The reaction takes place in the presence of glutamine and ATP through an activated gamma-phospho-Glu-tRNA(Gln). This Sphingopyxis alaskensis (strain DSM 13593 / LMG 18877 / RB2256) (Sphingomonas alaskensis) protein is Glutamyl-tRNA(Gln) amidotransferase subunit A.